A 307-amino-acid polypeptide reads, in one-letter code: Transmembrane and coiled-coil domain-containing protein 5B (307 aa).

The stretch at 20–212 (TLEAIKQNLK…SKAQNDSSQV (193 aa)) forms a coiled coil. Residues 246–268 (YLFFMVMIVIRLLGYVFFHLQYV) traverse the membrane as a helical segment.

It belongs to the TMCO5 family.

The protein resides in the membrane. The sequence is that of Transmembrane and coiled-coil domain-containing protein 5B (Tmco5b) from Mus musculus (Mouse).